A 237-amino-acid polypeptide reads, in one-letter code: Phosphoribosylaminoimidazole-succinocarboxamide synthase (237 aa).

This sequence belongs to the SAICAR synthetase family.

It carries out the reaction 5-amino-1-(5-phospho-D-ribosyl)imidazole-4-carboxylate + L-aspartate + ATP = (2S)-2-[5-amino-1-(5-phospho-beta-D-ribosyl)imidazole-4-carboxamido]succinate + ADP + phosphate + 2 H(+). It participates in purine metabolism; IMP biosynthesis via de novo pathway; 5-amino-1-(5-phospho-D-ribosyl)imidazole-4-carboxamide from 5-amino-1-(5-phospho-D-ribosyl)imidazole-4-carboxylate: step 1/2. The chain is Phosphoribosylaminoimidazole-succinocarboxamide synthase from Methanosarcina acetivorans (strain ATCC 35395 / DSM 2834 / JCM 12185 / C2A).